The following is a 447-amino-acid chain: Argininosuccinate synthase (447 aa).

Residues Ala17–Ser25 and Ala43 contribute to the ATP site. Tyr99 serves as a coordination point for L-citrulline. Residues Gly129 and Thr131 each coordinate ATP. L-aspartate-binding residues include Thr131, Asn135, and Asp136. Asn135 contacts L-citrulline. Asp136 contributes to the ATP binding site. L-citrulline contacts are provided by Arg139 and Ser192. Asp194 is an ATP binding site. The L-citrulline site is built by Thr201, Glu203, and Glu280.

This sequence belongs to the argininosuccinate synthase family. Type 2 subfamily. Homotetramer.

The protein resides in the cytoplasm. It carries out the reaction L-citrulline + L-aspartate + ATP = 2-(N(omega)-L-arginino)succinate + AMP + diphosphate + H(+). It participates in amino-acid biosynthesis; L-arginine biosynthesis; L-arginine from L-ornithine and carbamoyl phosphate: step 2/3. The chain is Argininosuccinate synthase from Klebsiella pneumoniae (strain 342).